The primary structure comprises 357 residues: DENN domain-containing protein 10 (357 aa).

The uDENN domain occupies 1-136 (MAAVVAMDTQ…IAVLTKGICQ (136 aa)). The 148-residue stretch at 152-299 (KAYLAGSIKD…PEKSDSQVIQ (148 aa)) folds into the cDENN domain. In terms of domain architecture, dDENN spans 301–357 (IALKTKEIFTHLAPFSEVSDDGGKVILNVEALKQQRFPPATENFLYHLAAAEQMLKV).

It belongs to the DENND10 family. In terms of assembly, interacts with the coiled-coil heterodimer of CCDC22 and CCDC93; the interaction is direct. Interacts with RAB27A and RAB27B (GDP-bound forms preferentially).

The protein localises to the late endosome. Its function is as follows. Guanine nucleotide exchange factor (GEF) regulating homeostasis of late endocytic pathway, including endosomal positioning, maturation and secretion, possibly through activating Rab proteins such as RAB27A and RAB27B. Promotes the exchange of GDP to GTP, converting inactive GDP-bound RAB27A and RAB27B into their active GTP-bound form. This is DENN domain-containing protein 10 from Mus musculus (Mouse).